The sequence spans 502 residues: Probable glycine dehydrogenase (decarboxylating) subunit 2 (502 aa).

An N6-(pyridoxal phosphate)lysine modification is found at K273.

This sequence belongs to the GcvP family. C-terminal subunit subfamily. As to quaternary structure, the glycine cleavage system is composed of four proteins: P, T, L and H. In this organism, the P 'protein' is a heterodimer of two subunits. The cofactor is pyridoxal 5'-phosphate.

The catalysed reaction is N(6)-[(R)-lipoyl]-L-lysyl-[glycine-cleavage complex H protein] + glycine + H(+) = N(6)-[(R)-S(8)-aminomethyldihydrolipoyl]-L-lysyl-[glycine-cleavage complex H protein] + CO2. Its function is as follows. The glycine cleavage system catalyzes the degradation of glycine. The P protein binds the alpha-amino group of glycine through its pyridoxal phosphate cofactor; CO(2) is released and the remaining methylamine moiety is then transferred to the lipoamide cofactor of the H protein. In Thermococcus kodakarensis (strain ATCC BAA-918 / JCM 12380 / KOD1) (Pyrococcus kodakaraensis (strain KOD1)), this protein is Probable glycine dehydrogenase (decarboxylating) subunit 2.